A 101-amino-acid polypeptide reads, in one-letter code: Urinary protein 2 (101 aa).

The N-terminal stretch at 1 to 21 is a signal peptide; that stretch reads MGKHILLLPLGLSLLMSSLLA. The UPAR/Ly6 domain maps to 22-99; the sequence is LQCFRCTSFD…CSATPFCNMV (78 aa). Cystine bridges form between C24-C51, C27-C36, C43-C70, C73-C89, and C90-C96. N-linked (GlcNAc...) asparagine glycans are attached at residues N67 and N74.

In terms of processing, N-glycosylated.

Its subcellular location is the secreted. The protein is Urinary protein 2 of Rattus norvegicus (Rat).